A 628-amino-acid polypeptide reads, in one-letter code: MSKVIGIDLGTTNSCVAVYEGGEAKIIPNKEGKNTTPSIVAFTDKGEVLVGDPAKRQAITNPNKTISSIKRIMGLMMSEENAKAAHDKVTYNIVDKDGMAAVDVAGKIYTPQEISAKILSKLKEDAEAYIGSSVTDAVITVPAYFNDAQRKATKDAGTIAGLNVLRIINEPTASALAYGLESKSDENVLVYDLGGGTFDVTVLEISDGTFEVLSTDGNAFLGGDDFDNKIVDYLNAEFKSSHGIDLKNDKMALQRLKDAAENAKKELSSSTETEINLPFITMTEAGPQHLVLKLTRAKFESMIEKLVEETIAHIKTAMKESGLDNDAIKEIIMVGGSTRVPLAQEMVSKFFGGKKLNKGVNPDEVVAAGAAIQGGVLRGDVKDVLLLDVTPLSLGIETLGGVATKIIEKGTTIPVKKSQIFSTAEDNQPAVSISVVQGEREFARDNKSLGLFELGNIAAAPRGVPQIEVTFDIDANGILTVSSTDKGTGKSQSITISGSSGLSEEEINKMVKDAELHKAEDSKRKELVELKNQADALIAQTEKSIGEMGDKIEADEKAKIEAAITELKDVLKDTNATKEKIEPKVKTLTEASHKMAEQMYKGEQGAQGGAADTSKKKSDDDVIDAEIE.

The residue at position 197 (T197) is a Phosphothreonine; by autocatalysis. A disordered region spans residues 597-628 (EQMYKGEQGAQGGAADTSKKKSDDDVIDAEIE).

It belongs to the heat shock protein 70 family.

In terms of biological role, acts as a chaperone. This Sulfurimonas denitrificans (strain ATCC 33889 / DSM 1251) (Thiomicrospira denitrificans (strain ATCC 33889 / DSM 1251)) protein is Chaperone protein DnaK.